The primary structure comprises 539 residues: Phosphoenolpyruvate carboxykinase (ATP) (539 aa).

Positions 64, 206, and 212 each coordinate substrate. ATP contacts are provided by residues K212, H231, and 247-255 (GLSGTGKTT). Residues K212 and H231 each coordinate Mn(2+). D268 lines the Mn(2+) pocket. Residues E296, R332, 448–449 (RI), and T454 each bind ATP. Substrate is bound at residue R332.

Belongs to the phosphoenolpyruvate carboxykinase (ATP) family. In terms of assembly, monomer. Requires Mn(2+) as cofactor.

It localises to the cytoplasm. The catalysed reaction is oxaloacetate + ATP = phosphoenolpyruvate + ADP + CO2. Its pathway is carbohydrate biosynthesis; gluconeogenesis. In terms of biological role, involved in the gluconeogenesis. Catalyzes the conversion of oxaloacetate (OAA) to phosphoenolpyruvate (PEP) through direct phosphoryl transfer between the nucleoside triphosphate and OAA. This chain is Phosphoenolpyruvate carboxykinase (ATP), found in Pectobacterium atrosepticum (strain SCRI 1043 / ATCC BAA-672) (Erwinia carotovora subsp. atroseptica).